A 612-amino-acid chain; its full sequence is Sulfite reductase [NADPH] hemoprotein beta-component (612 aa).

The disordered stretch occupies residues 1–26 (MDDHKPIETPDGPAVDTPGIGARRYE). [4Fe-4S] cluster-binding residues include C469, C475, C514, and C518. C518 is a binding site for siroheme.

This sequence belongs to the nitrite and sulfite reductase 4Fe-4S domain family. Alpha(8)-beta(8). The alpha component is a flavoprotein, the beta component is a hemoprotein. The cofactor is siroheme. Requires [4Fe-4S] cluster as cofactor.

It catalyses the reaction hydrogen sulfide + 3 NADP(+) + 3 H2O = sulfite + 3 NADPH + 4 H(+). It participates in sulfur metabolism; hydrogen sulfide biosynthesis; hydrogen sulfide from sulfite (NADPH route): step 1/1. Its function is as follows. Component of the sulfite reductase complex that catalyzes the 6-electron reduction of sulfite to sulfide. This is one of several activities required for the biosynthesis of L-cysteine from sulfate. In Methylorubrum extorquens (strain ATCC 14718 / DSM 1338 / JCM 2805 / NCIMB 9133 / AM1) (Methylobacterium extorquens), this protein is Sulfite reductase [NADPH] hemoprotein beta-component.